We begin with the raw amino-acid sequence, 229 residues long: Potassium/proton antiporter CemA (229 aa).

Helical transmembrane passes span 6–26, 107–127, and 189–209; these read AFIP…ISLC, ILHF…SFWG, and ILSG…KYWI.

The protein belongs to the CemA family.

Its subcellular location is the plastid. It localises to the chloroplast inner membrane. It catalyses the reaction K(+)(in) + H(+)(out) = K(+)(out) + H(+)(in). Functionally, contributes to K(+)/H(+) antiport activity by supporting proton efflux to control proton extrusion and homeostasis in chloroplasts in a light-dependent manner to modulate photosynthesis. Prevents excessive induction of non-photochemical quenching (NPQ) under continuous-light conditions. Indirectly promotes efficient inorganic carbon uptake into chloroplasts. The protein is Potassium/proton antiporter CemA of Draba nemorosa (Woodland whitlowgrass).